A 475-amino-acid polypeptide reads, in one-letter code: Ankyrin repeat, SAM and basic leucine zipper domain-containing protein 1 (475 aa).

The disordered stretch occupies residues 1–23 (MAAARFRGLAVAGGGESSESEDD). Serine 17, serine 18, and serine 20 each carry phosphoserine. ANK repeat units lie at residues 45–74 (EKNE…SVDS), 78–107 (YGWT…KASF), 110–144 (DKQT…DPNV), 148–177 (RLMT…EVNT), 181–210 (NGYT…NKML), and 214–243 (DGKT…PLEG). In terms of domain architecture, SAM spans 272-334 (SYTAFGDLEI…KILAALKELE (63 aa)).

Interacts with DDX4, PIWIL1, RANBP9 and TDRD1.

The protein localises to the cytoplasm. Functionally, plays a central role during spermatogenesis by repressing transposable elements and preventing their mobilization, which is essential for the germline integrity. Acts via the piRNA metabolic process, which mediates the repression of transposable elements during meiosis by forming complexes composed of piRNAs and Piwi proteins and governs the methylation and subsequent repression of transposons. Its association with pi-bodies suggests a participation in the primary piRNAs metabolic process. Required prior to the pachytene stage to facilitate the production of multiple types of piRNAs, including those associated with repeats involved in the regulation of retrotransposons. May act by mediating protein-protein interactions during germ cell maturation. This chain is Ankyrin repeat, SAM and basic leucine zipper domain-containing protein 1 (ASZ1), found in Equus caballus (Horse).